Reading from the N-terminus, the 328-residue chain is DNA-directed RNA polymerase subunit alpha (328 aa).

The segment at 1–231 (MIYQMQMPAK…EHVTFFANFS (231 aa)) is alpha N-terminal domain (alpha-NTD). The alpha C-terminal domain (alpha-CTD) stretch occupies residues 247-328 (DEFETMRRLL…MDITRYQMKG (82 aa)).

The protein belongs to the RNA polymerase alpha chain family. As to quaternary structure, homodimer. The RNAP catalytic core consists of 2 alpha, 1 beta, 1 beta' and 1 omega subunit. When a sigma factor is associated with the core the holoenzyme is formed, which can initiate transcription.

The catalysed reaction is RNA(n) + a ribonucleoside 5'-triphosphate = RNA(n+1) + diphosphate. In terms of biological role, DNA-dependent RNA polymerase catalyzes the transcription of DNA into RNA using the four ribonucleoside triphosphates as substrates. The protein is DNA-directed RNA polymerase subunit alpha of Chlorobium luteolum (strain DSM 273 / BCRC 81028 / 2530) (Pelodictyon luteolum).